The chain runs to 3471 residues: Genome polyprotein (3471 aa).

Residues 513–603 adopt a coiled-coil conformation; it reads EVQDALEKSM…RADIDALKKK (91 aa). Disordered regions lie at residues 603–639 and 1271–1307; these read KPAQSVTPLPSPSGNSGTAGEQRPPPRRRPPVVEMSE and NKTTYLADEQPTTSAPRTSTVDTEEDPPTEGEIARTS. Composition is skewed to polar residues over residues 606–621 and 1271–1291; these read QSVTPLPSPSGNSGTA and NKTTYLADEQPTTSAPRTSTV. A run of 2 helical transmembrane segments spans residues 1493–1513 and 1592–1612; these read DKWIWAALASILVGAALLHYY and MSSLLTILSVVASLVMWGKIP. One can recognise an SF3 helicase domain in the interval 1748-1914; the sequence is LELMNESYTY…PDVPKNEANP (167 aa). ATP is bound at residue 1774 to 1781; that stretch reads GAPGVGKS. The chain crosses the membrane as a helical span at residues 2360–2380; that stretch reads ILLAIGASVAVAGVAVGAVIL. The span at 2391–2401 shows a compositional bias: acidic residues; it reads EDEEIEGEEGE. Disordered regions lie at residues 2391-2411 and 2435-2460; these read EDEEIEGEEGETQASGAHESD and VAEAHEEKSTEKPRKPGNPTRKNFLG. Residues 2435 to 2448 show a composition bias toward basic and acidic residues; that stretch reads VAEAHEEKSTEKPR. Positions 2629–2847 constitute a Peptidase C3 domain; it reads GVDRDLSMTN…YAETLTQEHL (219 aa). Catalysis depends on for picornain 3C-like protease activity residues H2677, E2714, and C2808. The 132-residue stretch at 3152-3283 folds into the RdRp catalytic domain; that stretch reads TKGFAGDYSK…SVHEEFLDVY (132 aa).

In terms of processing, specific enzymatic cleavages by picornain 3C-like protease in vivo yield mature proteins. Picornain 3C-like protease is autocatalytically processed.

It localises to the virion. The protein resides in the host membrane. It catalyses the reaction RNA(n) + a ribonucleoside 5'-triphosphate = RNA(n+1) + diphosphate. Picornain 3C-like protease is a thiol protease that probably cleaves the polyprotein. The chain is Genome polyprotein from Oryza sativa (Rice).